A 380-amino-acid chain; its full sequence is Cytochrome b (380 aa).

4 consecutive transmembrane segments (helical) span residues 34 to 54, 78 to 99, 114 to 134, and 179 to 199; these read FGSLLGMCLIIQILTGLFLAM, WLIRNIHANGASMFFICVYLHI, WNIGVVILLLLMVTAFVGYVL, and FFTFHFLFPFVTAALTMIHLL. Residues histidine 84 and histidine 98 each contribute to the heme b site. Histidine 183 and histidine 197 together coordinate heme b. Histidine 202 is an a ubiquinone binding site. Helical transmembrane passes span 227–247, 289–309, 321–341, and 348–368; these read YKDLVGFFILLFLLTLLALFT, LGGVLALVFSILILLLVPILH, ITQILFWLLVTNTIILTWIGG, and FITIGQIASITYFSFFLILFP.

The protein belongs to the cytochrome b family. In terms of assembly, the cytochrome bc1 complex contains 3 respiratory subunits (MT-CYB, CYC1 and UQCRFS1), 2 core proteins (UQCRC1 and UQCRC2) and probably 6 low-molecular weight proteins. The cofactor is heme b.

Its subcellular location is the mitochondrion inner membrane. Component of the ubiquinol-cytochrome c reductase complex (complex III or cytochrome b-c1 complex) that is part of the mitochondrial respiratory chain. The b-c1 complex mediates electron transfer from ubiquinol to cytochrome c. Contributes to the generation of a proton gradient across the mitochondrial membrane that is then used for ATP synthesis. This Hemitrygon laosensis (Mekong freshwater stingray) protein is Cytochrome b (mt-cyb).